Reading from the N-terminus, the 96-residue chain is Aspartyl/glutamyl-tRNA(Asn/Gln) amidotransferase subunit C (96 aa).

The protein belongs to the GatC family. Heterotrimer of A, B and C subunits.

It catalyses the reaction L-glutamyl-tRNA(Gln) + L-glutamine + ATP + H2O = L-glutaminyl-tRNA(Gln) + L-glutamate + ADP + phosphate + H(+). It carries out the reaction L-aspartyl-tRNA(Asn) + L-glutamine + ATP + H2O = L-asparaginyl-tRNA(Asn) + L-glutamate + ADP + phosphate + 2 H(+). Allows the formation of correctly charged Asn-tRNA(Asn) or Gln-tRNA(Gln) through the transamidation of misacylated Asp-tRNA(Asn) or Glu-tRNA(Gln) in organisms which lack either or both of asparaginyl-tRNA or glutaminyl-tRNA synthetases. The reaction takes place in the presence of glutamine and ATP through an activated phospho-Asp-tRNA(Asn) or phospho-Glu-tRNA(Gln). In Sulfurimonas denitrificans (strain ATCC 33889 / DSM 1251) (Thiomicrospira denitrificans (strain ATCC 33889 / DSM 1251)), this protein is Aspartyl/glutamyl-tRNA(Asn/Gln) amidotransferase subunit C.